Here is a 158-residue protein sequence, read N- to C-terminus: Transcription elongation factor GreA (158 aa).

This sequence belongs to the GreA/GreB family.

Functionally, necessary for efficient RNA polymerase transcription elongation past template-encoded arresting sites. The arresting sites in DNA have the property of trapping a certain fraction of elongating RNA polymerases that pass through, resulting in locked ternary complexes. Cleavage of the nascent transcript by cleavage factors such as GreA or GreB allows the resumption of elongation from the new 3'terminus. GreA releases sequences of 2 to 3 nucleotides. The polypeptide is Transcription elongation factor GreA (Allorhizobium ampelinum (strain ATCC BAA-846 / DSM 112012 / S4) (Agrobacterium vitis (strain S4))).